Consider the following 273-residue polypeptide: Thymidylate synthase (273 aa).

Arginine 31 serves as a coordination point for dUMP. Histidine 61 contributes to the (6R)-5,10-methylene-5,6,7,8-tetrahydrofolate binding site. Position 136–137 (arginine 136–arginine 137) interacts with dUMP. The active-site Nucleophile is the cysteine 156. Residues arginine 176 to aspartate 179, asparagine 187, and histidine 217 to tyrosine 219 contribute to the dUMP site. Residue aspartate 179 coordinates (6R)-5,10-methylene-5,6,7,8-tetrahydrofolate. Alanine 272 lines the (6R)-5,10-methylene-5,6,7,8-tetrahydrofolate pocket.

The protein belongs to the thymidylate synthase family. Bacterial-type ThyA subfamily. As to quaternary structure, homodimer.

It is found in the cytoplasm. It catalyses the reaction dUMP + (6R)-5,10-methylene-5,6,7,8-tetrahydrofolate = 7,8-dihydrofolate + dTMP. It functions in the pathway pyrimidine metabolism; dTTP biosynthesis. Catalyzes the reductive methylation of 2'-deoxyuridine-5'-monophosphate (dUMP) to 2'-deoxythymidine-5'-monophosphate (dTMP) while utilizing 5,10-methylenetetrahydrofolate (mTHF) as the methyl donor and reductant in the reaction, yielding dihydrofolate (DHF) as a by-product. This enzymatic reaction provides an intracellular de novo source of dTMP, an essential precursor for DNA biosynthesis. The chain is Thymidylate synthase from Corynebacterium jeikeium (strain K411).